The chain runs to 287 residues: Pantothenate synthetase (287 aa).

Residue M37–H44 participates in ATP binding. The active-site Proton donor is the H44. A (R)-pantoate-binding site is contributed by Q68. Q68 contributes to the beta-alanine binding site. G154–D157 lines the ATP pocket. Residue Q160 participates in (R)-pantoate binding. Residues V183 and L191 to R194 each bind ATP.

It belongs to the pantothenate synthetase family. Homodimer.

The protein localises to the cytoplasm. The enzyme catalyses (R)-pantoate + beta-alanine + ATP = (R)-pantothenate + AMP + diphosphate + H(+). The protein operates within cofactor biosynthesis; (R)-pantothenate biosynthesis; (R)-pantothenate from (R)-pantoate and beta-alanine: step 1/1. Functionally, catalyzes the condensation of pantoate with beta-alanine in an ATP-dependent reaction via a pantoyl-adenylate intermediate. The chain is Pantothenate synthetase from Leifsonia xyli subsp. xyli (strain CTCB07).